A 1503-amino-acid chain; its full sequence is Transient receptor potential cation channel subfamily M member 2 (1503 aa).

The interval 1–20 (MEPSALRKAGSEQEEGFEGL) is disordered. The Cytoplasmic portion of the chain corresponds to 1–752 (MEPSALRKAG…WWGQLSVDNG (752 aa)). 5 residues coordinate ADP-D-ribose: T174, N179, R302, G333, and T336. T740 carries the phosphothreonine modification. Residues 753–769 (LWRVTLCMLAFPLLLTG) lie within the membrane without spanning it. Topologically, residues 770-795 (LISFREKRLQDVGTPAARARAFFTAP) are cytoplasmic. A helical transmembrane segment spans residues 796–816 (VVVFHLNILSYFAFLCLFAYV). Topologically, residues 817-827 (LMVDFQPVPSW) are extracellular. Residues 828-848 (CECAIYLWLFSLVCEEMRQLF) traverse the membrane as a helical segment. Ca(2+)-binding residues include E843 and Q846. Residues 849 to 867 (YDPDECGLMKKAALYFSDF) are Cytoplasmic-facing. Residues 868 to 888 (WNKLDVGAILLFVAGLTCRLI) traverse the membrane as a helical segment. A Ca(2+)-binding site is contributed by N869. Residues 889-896 (PATLYPGR) lie on the Extracellular side of the membrane. Residues 897–917 (VILSLDFILFCLRLMHIFTIS) traverse the membrane as a helical segment. Residues 918–929 (KTLGPKIIIVKR) lie on the Cytoplasmic side of the membrane. A helical transmembrane segment spans residues 930–950 (MMKDVFFFLFLLAVWVVSFGV). Residues 951–970 (AKQAILIHNERRVDWLFRGA) lie on the Extracellular side of the membrane. The pore-forming intramembrane region spans 971-985 (VYHSYLTIFGQIPGY). The Selectivity filter signature appears at 979-982 (FGQI). Residues 986-1022 (IDGVNFNPEHCSPNGTDPYKPKCPESDATQQRPAFPE) lie on the Extracellular side of the membrane. Cysteines 996 and 1008 form a disulfide. Residues 1023-1044 (WLTVLLLCLYLLFTNILLLNLL) traverse the membrane as a helical segment. The Cytoplasmic portion of the chain corresponds to 1045–1079 (IAMFNYTFQQVQEHTDQIWKFQRHDLIEEYHGRPA). E1073 lines the Ca(2+) pocket. An intramembrane segment occupies 1080-1098 (APPPFILLSHLQLFIKRVV). The Cytoplasmic portion of the chain corresponds to 1099–1503 (LKTPAKRHKQ…KAAAEFGAHY (405 aa)). Residues 1206–1237 (EADVPTLASQKAAEEPDAEPGGRKKTEEPGDS) form a disordered region. Residues 1354–1498 (RWRRNEDGAI…KTLLQKAAAE (145 aa)) enclose the Nudix hydrolase domain. The ADP-D-ribose site is built by L1381 and S1382. The Nudix box signature appears at 1390 to 1411 (GSREPGEMLPRKLKRILRQEHW). Residues D1431, R1433, Y1485, and N1487 each contribute to the ADP-D-ribose site.

This sequence belongs to the transient receptor (TC 1.A.4) family. LTrpC subfamily. TRPM2 sub-subfamily. In terms of assembly, homotetramer. Isoform 1 can interact with isoform 3. This interaction decreases Ca(2+) influx through isoform 1 and suppresses susceptibility to oxidative stress-induced cell death. In terms of processing, phosphorylation of TRPM2 at Thr-740 by protein kinase C (PKC) counteracts the effect of cytosolic Ca(2+) and elevates the temperature threshold. As to expression, highly expressed in brain and peripheral blood cells, such as neutrophils. Also detected in bone marrow, spleen, heart, liver and lung. Isoform 2 is found in neutrophil granulocytes.

It localises to the cell membrane. The protein localises to the perikaryon. The protein resides in the cell projection. It is found in the cytoplasmic vesicle. Its subcellular location is the lysosome. It carries out the reaction Ca(2+)(in) = Ca(2+)(out). The catalysed reaction is Na(+)(in) = Na(+)(out). Activated by intracellular ADP-ribose, beta-NAD (NAD(+)) and similar compounds, and by oxidative stress caused by reactive oxygen or nitrogen species. Ca(2+) and PI(4,5)P2 are required for channel opening by ADP-ribose. Activation by ADP-ribose and beta-NAD is strongly increased by moderate heat (35 to 40 degrees Celsius). Likewise, reactive oxygen species lower the threshold for activation by moderate heat (37 degrees Celsius). Activated by moderate heat (35 to 40 degrees Celsius). Inactivated by exposure to extracellular pH between 4.0 and 6.5; irreversibly inactivated when open channels are exposed to extracellular pH between 4.0 and 6.5, while pre-exposure of closed channels to extracellular pH 5.5 gives rise to currents that rapidly inactivate, but protects against irreversible inactivation. Inactivated by intracellular ATP. Activated by arachidonic acid. Inhibited by 2-aminoethyl diphenylborinate (2-APB). Its function is as follows. Nonselective, voltage-independent cation channel that mediates Na(+) and Ca(2+) influx, leading to increased cytoplasmic Ca(2+) levels. Functions as a ligand-gated ion channel, gated by intracellular adenosine diphosphate ribose (ADP-ribose), Ca(2+), warm temperature, and oxidative stress. The precise physiological activators are under debate; the true, physiological activators may be ADP-ribose and ADP-ribose-2'-phosphate. Binding of ADP-ribose to the cytoplasmic Nudix domain causes a conformation change; the channel is primed but still requires Ca(2+) binding to trigger channel opening. Extracellular Ca(2+) passes through the channel and increases channel activity. Contributes to Ca(2+) release from intracellular stores in response to ADP-ribose. Plays a role in numerous processes that involve signaling via intracellular Ca(2+) levels. Besides, mediates the release of lysosomal Zn(2+) stores in response to reactive oxygen species, leading to increased cytosolic Zn(2+) levels. Plays a role in mediating behavorial and physiological responses to moderate heat and thereby contributes to body temperature homeostasis. Plays a role in insulin secretion, a process that requires increased cytoplasmic Ca(2+) levels. Required for normal IFNG and cytokine secretion and normal innate immune immunity in response to bacterial infection. Required for normal phagocytosis and cytokine release by macrophages exposed to zymosan (in vitro). Plays a role in dendritic cell differentiation and maturation, and in dendritic cell chemotaxis via its role in regulating cytoplasmic Ca(2+) levels. Plays a role in the regulation of the reorganization of the actin cytoskeleton and filopodia formation in response to reactive oxygen species via its role in increasing cytoplasmic Ca(2+) and Zn(2+) levels. Confers susceptibility to cell death following oxidative stress. Functionally, lacks cation channel activity. Does not mediate cation transport in response to oxidative stress or ADP-ribose. In terms of biological role, lacks cation channel activity and negatively regulates the channel activity of isoform 1. Negatively regulates susceptibility to cell death in reposponse to oxidative stress. This is Transient receptor potential cation channel subfamily M member 2 (TRPM2) from Homo sapiens (Human).